A 647-amino-acid chain; its full sequence is tRNA 5-methylaminomethyl-2-thiouridine biosynthesis bifunctional protein MnmC (647 aa).

The tRNA (mnm(5)s(2)U34)-methyltransferase stretch occupies residues Met1–Ser227. The tract at residues Val256 to Lys647 is FAD-dependent cmnm(5)s(2)U34 oxidoreductase.

This sequence in the N-terminal section; belongs to the methyltransferase superfamily. tRNA (mnm(5)s(2)U34)-methyltransferase family. The protein in the C-terminal section; belongs to the DAO family. It depends on FAD as a cofactor.

The protein localises to the cytoplasm. It catalyses the reaction 5-aminomethyl-2-thiouridine(34) in tRNA + S-adenosyl-L-methionine = 5-methylaminomethyl-2-thiouridine(34) in tRNA + S-adenosyl-L-homocysteine + H(+). Its function is as follows. Catalyzes the last two steps in the biosynthesis of 5-methylaminomethyl-2-thiouridine (mnm(5)s(2)U) at the wobble position (U34) in tRNA. Catalyzes the FAD-dependent demodification of cmnm(5)s(2)U34 to nm(5)s(2)U34, followed by the transfer of a methyl group from S-adenosyl-L-methionine to nm(5)s(2)U34, to form mnm(5)s(2)U34. This is tRNA 5-methylaminomethyl-2-thiouridine biosynthesis bifunctional protein MnmC from Leptospira interrogans serogroup Icterohaemorrhagiae serovar Lai (strain 56601).